A 347-amino-acid chain; its full sequence is Phenylalanine--tRNA ligase alpha subunit (347 aa).

Glu-261 lines the Mg(2+) pocket.

Belongs to the class-II aminoacyl-tRNA synthetase family. Phe-tRNA synthetase alpha subunit type 1 subfamily. As to quaternary structure, tetramer of two alpha and two beta subunits. It depends on Mg(2+) as a cofactor.

It is found in the cytoplasm. The catalysed reaction is tRNA(Phe) + L-phenylalanine + ATP = L-phenylalanyl-tRNA(Phe) + AMP + diphosphate + H(+). This is Phenylalanine--tRNA ligase alpha subunit from Streptococcus pyogenes serotype M1.